The primary structure comprises 486 residues: Transcription factor bHLH49 (486 aa).

The span at 1-17 (MDLSAKDEFSAEKRNPD) shows a compositional bias: basic and acidic residues. Disordered stretches follow at residues 1 to 30 (MDLSAKDEFSAEKRNPDNYDSVNNPSGDWR) and 194 to 300 (KEST…KDGY). Polar residues-rich tracts occupy residues 198-221 (VRSSEQAKPNVPGSGNVSEDTQSS) and 243-254 (QKNSEAAQSHRS). Positions 273-293 (QSPNSPGKKSNSGKQQGKQSS) are enriched in low complexity. One can recognise a bHLH domain in the interval 309–359 (QATNSHSLAERVRREKISERMKFLQDLVPGCNKVTGKAVMLDEIINYVQSL).

As to quaternary structure, homodimer. Interacts with IBH1. As to expression, expressed constitutively in roots, stems, and flowers.

It is found in the nucleus. Transcriptional activator involved in cell elongation. Regulates the expression of a subset of genes involved in cell expansion by binding to the G-box motif. The chain is Transcription factor bHLH49 (BHLH49) from Arabidopsis thaliana (Mouse-ear cress).